The sequence spans 325 residues: Glycine--tRNA ligase alpha subunit (325 aa).

It belongs to the class-II aminoacyl-tRNA synthetase family. In terms of assembly, tetramer of two alpha and two beta subunits.

It is found in the cytoplasm. The enzyme catalyses tRNA(Gly) + glycine + ATP = glycyl-tRNA(Gly) + AMP + diphosphate. This Ralstonia nicotianae (strain ATCC BAA-1114 / GMI1000) (Ralstonia solanacearum) protein is Glycine--tRNA ligase alpha subunit.